The primary structure comprises 153 residues: Ribonuclease H (153 aa).

In terms of domain architecture, RNase H type-1 spans 1–142; sequence MRKKIEIFTD…CDELARIAAE (142 aa). Residues aspartate 10, glutamate 48, aspartate 70, and aspartate 134 each coordinate Mg(2+).

It belongs to the RNase H family. As to quaternary structure, monomer. Mg(2+) is required as a cofactor.

It localises to the cytoplasm. The enzyme catalyses Endonucleolytic cleavage to 5'-phosphomonoester.. Its function is as follows. Endonuclease that specifically degrades the RNA of RNA-DNA hybrids. The protein is Ribonuclease H of Baumannia cicadellinicola subsp. Homalodisca coagulata.